A 529-amino-acid chain; its full sequence is 3-ketoacyl-CoA synthase 20 (529 aa).

Residues 1–22 are disordered; sequence MSHNQNQPHRPVPVHVTNAEPN. Helical transmembrane passes span 52 to 72 and 84 to 104; these read LYIL…SFTI and FHFL…TAYF. The 294-residue stretch at 103–396 folds into the FAE domain; the sequence is YFTTRPRRVF…FFATLVARKV (294 aa). Catalysis depends on residues C247, H326, H415, H419, and N452.

The protein belongs to the thiolase-like superfamily. Chalcone/stilbene synthases family. As to expression, expressed in aerial organs. Expressed in leaves, flowers, siliques and stems. Expressed in roots, young seedlings, leaves, flowers and siliques.

The protein resides in the membrane. The enzyme catalyses a very-long-chain acyl-CoA + malonyl-CoA + H(+) = a very-long-chain 3-oxoacyl-CoA + CO2 + CoA. Its pathway is lipid metabolism; fatty acid biosynthesis. Inhibited by K3 herbicides such as alachlor, allidochlor, anilofos, cafenstrole, fentrazamide and flufenacet. Strongly inhibited by metazachlor and only slightly by mefluidide. Functionally, mediates the synthesis of VLCFAs from 22 to 26 carbons in length (e.g. C22, C24, C26). Functionally redundant with KCS2 in the two-carbon elongation of C22 fatty acids that is required for cuticular wax and root suberin biosynthesis. This chain is 3-ketoacyl-CoA synthase 20, found in Arabidopsis thaliana (Mouse-ear cress).